We begin with the raw amino-acid sequence, 245 residues long: Ribonuclease PH (245 aa).

Phosphate is bound by residues Arg-93 and 131–133 (GTR).

The protein belongs to the RNase PH family. Homohexameric ring arranged as a trimer of dimers.

The enzyme catalyses tRNA(n+1) + phosphate = tRNA(n) + a ribonucleoside 5'-diphosphate. Functionally, phosphorolytic 3'-5' exoribonuclease that plays an important role in tRNA 3'-end maturation. Removes nucleotide residues following the 3'-CCA terminus of tRNAs; can also add nucleotides to the ends of RNA molecules by using nucleoside diphosphates as substrates, but this may not be physiologically important. Probably plays a role in initiation of 16S rRNA degradation (leading to ribosome degradation) during starvation. The protein is Ribonuclease PH of Corynebacterium efficiens (strain DSM 44549 / YS-314 / AJ 12310 / JCM 11189 / NBRC 100395).